The sequence spans 342 residues: Homocysteine S-methyltransferase 4 (342 aa).

The Hcy-binding domain occupies 13–328; the sequence is ALRGFVREAG…ATVRAIARAV (316 aa). Residues cysteine 245, cysteine 313, and cysteine 314 each coordinate Zn(2+).

In terms of assembly, monomer. The cofactor is Zn(2+).

The enzyme catalyses S-methyl-L-methionine + L-homocysteine = 2 L-methionine + H(+). Functionally, catalyzes methyl transfer from S-methylmethionine (SMM) to adenosyl-L-homocysteine (AdoMet). SMM degradation (by HMT-1, HMT-2, HMT-3 and HMT-4) and biosynthesis (by MMT1) constitute the SMM cycle in plants, which is probably required to achieve short term control of AdoMet level. This chain is Homocysteine S-methyltransferase 4 (HMT-4), found in Zea mays (Maize).